The sequence spans 583 residues: Protein disulfide-isomerase-like protein of the testis (583 aa).

Residues 1 to 17 (MDLLWMPLLLVAARISA) form the signal peptide. 4 N-linked (GlcNAc...) asparagine glycosylation sites follow: Asn-58, Asn-128, Asn-160, and Asn-340. In terms of domain architecture, Thioredoxin spans 388-451 (LVKQLVGKNF…IAKIDITAND (64 aa)). 2 stretches are compositionally biased toward basic and acidic residues: residues 522-531 (EVPMMKKELP) and 540-559 (NVTK…KTSE). The interval 522–583 (EVPMMKKELP…KKKPKVKEEL (62 aa)) is disordered. Asn-540 carries N-linked (GlcNAc...) asparagine glycosylation. The segment covering 573 to 583 (QKKKPKVKEEL) has biased composition (basic residues). The Prevents secretion from ER signature appears at 580-583 (KEEL).

Belongs to the protein disulfide isomerase family. As to quaternary structure, homodimer. The homodimer is not disulfide-linked. Interacts with ERO1A and CLGN. In terms of processing, N-glycosylated.

The protein resides in the endoplasmic reticulum. Its function is as follows. Probable redox-inactive chaperone involved in spermatogenesis. The protein is Protein disulfide-isomerase-like protein of the testis (PDILT) of Macaca fascicularis (Crab-eating macaque).